Here is a 265-residue protein sequence, read N- to C-terminus: Undecaprenyl-diphosphatase (265 aa).

Transmembrane regions (helical) follow at residues 38–58 (SDMFNIVIQAGAILAVTIIYW), 80–100 (LIVAFLITAILGLVVKKLGFE), 107–127 (PIAWALIIGGIWMIFAEWAAA), 135–155 (ITWLVAILVGIAQIVAGVFPG), 175–195 (AAATEFAFLVGIPTMYAASGY), 213–233 (ALAIAFIVSTIVAFIAVKWLL), and 244–264 (FAIYRIILGVLLLGMATSGLI).

The protein belongs to the UppP family.

The protein localises to the cell inner membrane. The enzyme catalyses di-trans,octa-cis-undecaprenyl diphosphate + H2O = di-trans,octa-cis-undecaprenyl phosphate + phosphate + H(+). Catalyzes the dephosphorylation of undecaprenyl diphosphate (UPP). Confers resistance to bacitracin. This is Undecaprenyl-diphosphatase from Rhizobium etli (strain CIAT 652).